The sequence spans 189 residues: Protein Rex (189 aa).

A compositionally biased stretch (basic residues) spans 1–16 (MPKTRRRPRRSQRKRP). The interval 1 to 27 (MPKTRRRPRRSQRKRPPTPWPTSQGLD) is disordered. Positions 2–18 (PKTRRRPRRSQRKRPPT) match the Nuclear localization signal, and RNA-binding (RxRE) motif. The interval 56-70 (RPAYIVTPYWPPVQS) is homomultimerization. Position 70 is a phosphoserine; by host (S70). Residues 73 to 189 (SPGTPSMDAL…PPSPGPSCPT (117 aa)) form a disordered region. The segment covering 80 to 94 (DALSAQLYSSLSLDS) has biased composition (low complexity). Residues 82-93 (LSAQLYSSLSLD) carry the Nuclear export signal motif. Residues 123–131 (PSSRPCANT) form a homomultimerization region. The segment covering 143–164 (LGSTSQPCLFQTPDSGPKTCTP) has biased composition (polar residues). T174 bears the Phosphothreonine; by host mark. Position 177 is a phosphoserine; by host (S177). Positions 178-189 (FPPPSPGPSCPT) are enriched in pro residues.

Belongs to the deltaretrovirus Rex protein family. In terms of assembly, homomultimer. Multimeric assembly is essential for activity and involves XPO1. Binds to human XPO1 and KPNB1. Interacts (via N-terminal nuclear localization signal) with human NPM1.

It is found in the host nucleus. The protein localises to the host nucleolus. It localises to the host cytoplasm. Its function is as follows. Rex escorts unspliced gag-pro-pol and singly spliced env mRNAs out of the nucleus of infected cells. These mRNAs carry a recognition sequence called Rex responsive element (RxRE or XRE) located at the 3' region of the long terminal repeat (LTR). This function is essential since most HTLV proteins are translated from unspliced or partially spliced pre-mRNAs that cannot exit the nucleus by the pathway used by fully processed cellular mRNAs. Rex itself is translated from a fully spliced mRNA that probably readily exits the nucleus. Rex's nuclear localization signal (NLS) binds directly to KPNB1/importin beta-1 without previous binding to KPNA1/importin alpha-1. KPNB1 binds to the GDP bound form of RAN (Ran-GDP) and targets Rex to the nucleus. In the nucleus, the conversion from Ran-GDP to Ran-GTP dissociates Rex from KPNB1 and allows Rex's binding to the RRE in viral pre-mRNAs. Rex multimerizes on the RRE via cooperative assembly. This multimerization is critical for its full biological activity, since it may shield the viral RNA from being spliced or down-regulated, and probably exposes Rex's nuclear export signal (NES) to the surface. Rex can then form a complex with XPO1/CRM1, RANBP3 and Ran-GTP, leading to nuclear export of the complex. Conversion from Ran-GTP to Ran-GDP mediates dissociation of the Rex/RRE/XPO1/RANBP3/RAN complex, so that Rex can return to the nucleus for a subsequent round of export. The chain is Protein Rex from Human T-cell leukemia virus 1 (strain Japan ATK-1 subtype A) (HTLV-1).